The chain runs to 1441 residues: Receptor-type tyrosine-protein phosphatase T (1441 aa).

Residues 1 to 25 form the signal peptide; it reads MASLAALALSLLLRLQLPPLPGARA. Over 26 to 747 the chain is Extracellular; it reads QSAAGGCSFD…EKQVDNTVKM (722 aa). The MAM domain maps to 30 to 191; sequence GGCSFDEHYS…VRVLAHPCRK (162 aa). N-linked (GlcNAc...) asparagine glycosylation is found at asparagine 78, asparagine 98, asparagine 137, and asparagine 208. The Ig-like C2-type domain occupies 193–284; that stretch reads PHFLRLQNVE…SGVSNYAELI (92 aa). A disulfide bridge connects residues cysteine 213 and cysteine 267. 4 Fibronectin type-III domains span residues 291–384, 389–483, 484–590, and 591–726; these read PIAP…TKCA, GPQN…TEED, VPGA…SAPS, and MPEY…ATKG. 6 N-linked (GlcNAc...) asparagine glycosylation sites follow: asparagine 421, asparagine 510, asparagine 547, asparagine 601, asparagine 654, and asparagine 684. Residues 748–768 form a helical membrane-spanning segment; that stretch reads AGVIAGLLMFIIILLGVMLTI. Residues 769–1441 lie on the Cytoplasmic side of the membrane; it reads KRRRNAYSYS…EVALEYLSSF (673 aa). The tract at residues 790-839 is disordered; it reads TQSGAQREMGPVASADKPTTKLSASRNDEGFSSSSQDVNGFTDGSRGELS. Residues 809–828 are compositionally biased toward polar residues; that stretch reads TKLSASRNDEGFSSSSQDVN. 2 Tyrosine-protein phosphatase domains span residues 889-1143 and 1175-1437; these read FKEE…ILEA and IKDE…ALEY. Residues aspartate 1052, 1084 to 1090, and glutamine 1128 each bind substrate; that span reads CSAGAGR. Cysteine 1084 (phosphocysteine intermediate) is an active-site residue. Serine 1208 carries the post-translational modification Phosphoserine. Cysteine 1378 acts as the Phosphocysteine intermediate in catalysis.

The protein belongs to the protein-tyrosine phosphatase family. Receptor class 2B subfamily. As to expression, expressed in colon, lung, heart and testis, as well as in fetal and adult brain. Not detected in muscle and peripheral blood leukocytes.

The protein resides in the membrane. It catalyses the reaction O-phospho-L-tyrosyl-[protein] + H2O = L-tyrosyl-[protein] + phosphate. May be involved in both signal transduction and cellular adhesion in the CNS. The protein is Receptor-type tyrosine-protein phosphatase T (PTPRT) of Homo sapiens (Human).